The following is a 612-amino-acid chain: Phosphopentomutase (612 aa).

A2 carries the N-acetylalanine modification. Residues R63 and S165 each coordinate alpha-D-glucose 1,6-bisphosphate. The Phosphoserine intermediate role is filled by S165. Mg(2+)-binding residues include S165, D322, D324, and D326. S165 bears the Phosphoserine mark. Alpha-D-glucose 1,6-bisphosphate-binding residues include D326, R327, T400, E424, and K438.

Belongs to the phosphohexose mutase family. In terms of assembly, monomer. Requires Mg(2+) as cofactor.

It localises to the cytoplasm. The protein localises to the cytosol. It catalyses the reaction alpha-D-ribose 1-phosphate = D-ribose 5-phosphate. It carries out the reaction 2-deoxy-alpha-D-ribose 1-phosphate = 2-deoxy-D-ribose 5-phosphate. The enzyme catalyses alpha-D-glucose 1-phosphate = alpha-D-glucose 6-phosphate. The catalysed reaction is O-phospho-L-seryl-[protein] + alpha-D-glucose 1-phosphate = alpha-D-glucose 1,6-bisphosphate + L-seryl-[protein]. It catalyses the reaction alpha-D-glucose 1,6-bisphosphate + L-seryl-[protein] = O-phospho-L-seryl-[protein] + alpha-D-glucose 6-phosphate. Its activity is regulated as follows. The phosphomutase activity is stimulated by glucose 1,6-bisphosphate. Its function is as follows. Catalyzes the conversion of the nucleoside breakdown products ribose-1-phosphate and deoxyribose-1-phosphate to the corresponding 5-phosphopentoses. Catalyzes the reversible isomerization of alpha-D-glucose 1-phosphate to alpha-D-glucose 6-phosphate but with a lower catalytic efficiency. The mechanism proceeds via the intermediate compound alpha-D-glucose 1,6-bisphosphate. In vitro, also has a low glucose 1,6-bisphosphate synthase activity which is most probably not physiologically relevant. This is Phosphopentomutase from Homo sapiens (Human).